The primary structure comprises 76 residues: Translational regulator CsrA (76 aa).

The protein belongs to the CsrA/RsmA family. Homodimer; the beta-strands of each monomer intercalate to form a hydrophobic core, while the alpha-helices form wings that extend away from the core.

It localises to the cytoplasm. In terms of biological role, a translational regulator that binds mRNA to regulate translation initiation and/or mRNA stability. Usually binds in the 5'-UTR at or near the Shine-Dalgarno sequence preventing ribosome-binding, thus repressing translation. Its main target seems to be the major flagellin gene, while its function is anatagonized by FliW. The chain is Translational regulator CsrA from Syntrophomonas wolfei subsp. wolfei (strain DSM 2245B / Goettingen).